Reading from the N-terminus, the 83-residue chain is Mu-theraphotoxin-Hhn2j 2 (83 aa).

A signal peptide spans 1 to 21 (MKASMFLALAGLVLLFVVGYA). Residues 22–48 (SESEEKEFPIELLSKIFAVDVFKGEDR) constitute a propeptide that is removed on maturation. 3 disulfides stabilise this stretch: Cys-50/Cys-65, Cys-57/Cys-70, and Cys-64/Cys-77. Residue Leu-81 is modified to Leucine amide.

It belongs to the neurotoxin 10 (Hwtx-1) family. 15 (Hntx-3) subfamily. In terms of assembly, monomer. Expressed by the venom gland.

The protein resides in the secreted. Its function is as follows. Lethal neurotoxin. Selectively blocks tetrodotoxin-sensitive voltage-gated sodium channels (Nav). Does not affect tetrodotoxin-resistant voltage-gated sodium channels or calcium channels. This Cyriopagopus hainanus (Chinese bird spider) protein is Mu-theraphotoxin-Hhn2j 2.